A 910-amino-acid chain; its full sequence is DNA mismatch repair protein MutS (910 aa).

The segment covering 1-11 (MEAKVEEKEPE) has biased composition (basic and acidic residues). The disordered stretch occupies residues 1 to 21 (MEAKVEEKEPEPVENAGPDAP). 658-665 (GPNMGGKS) provides a ligand contact to ATP.

It belongs to the DNA mismatch repair MutS family.

Its function is as follows. This protein is involved in the repair of mismatches in DNA. It is possible that it carries out the mismatch recognition step. This protein has a weak ATPase activity. The protein is DNA mismatch repair protein MutS of Brucella canis (strain ATCC 23365 / NCTC 10854 / RM-666).